The following is a 476-amino-acid chain: Chromosomal replication initiator protein DnaA (476 aa).

The interval 1–87 (MSDRSDPTHA…AGVSNFAIVV (87 aa)) is domain I, interacts with DnaA modulators. The segment at 87–131 (VNPGIAQDAFAQHPEPAEQPYIETPTITAPTDNPGLPASPSRGDS) is domain II. Residues 132–348 (RLNPKYGFDT…GTLIRVTAFA (217 aa)) form a domain III, AAA+ region region. ATP is bound by residues glycine 176, glycine 178, lysine 179, and threonine 180. The interval 349–476 (SLNKTPVDLA…IKQNHRYGKM (128 aa)) is domain IV, binds dsDNA.

Belongs to the DnaA family. Oligomerizes as a right-handed, spiral filament on DNA at oriC.

The protein resides in the cytoplasm. Plays an essential role in the initiation and regulation of chromosomal replication. ATP-DnaA binds to the origin of replication (oriC) to initiate formation of the DNA replication initiation complex once per cell cycle. Binds the DnaA box (a 9 base pair repeat at the origin) and separates the double-stranded (ds)DNA. Forms a right-handed helical filament on oriC DNA; dsDNA binds to the exterior of the filament while single-stranded (ss)DNA is stabiized in the filament's interior. The ATP-DnaA-oriC complex binds and stabilizes one strand of the AT-rich DNA unwinding element (DUE), permitting loading of DNA polymerase. After initiation quickly degrades to an ADP-DnaA complex that is not apt for DNA replication. Binds acidic phospholipids. The polypeptide is Chromosomal replication initiator protein DnaA (Clavibacter sepedonicus (Clavibacter michiganensis subsp. sepedonicus)).